Consider the following 300-residue polypeptide: Secreted mono- and diacylglycerol lipase LIP4 (300 aa).

The first 16 residues, 1 to 16, serve as a signal peptide directing secretion; that stretch reads MRFLAFLLCLVPLALC. C54 and C293 are disulfide-bonded. The active-site Nucleophile is S167. D224 is an active-site residue.

This sequence belongs to the AB hydrolase superfamily. Lipase family. Class 3 subfamily.

The protein resides in the secreted. It catalyses the reaction a monoacylglycerol + H2O = glycerol + a fatty acid + H(+). The enzyme catalyses a diacylglycerol + H2O = a monoacylglycerol + a fatty acid + H(+). In terms of biological role, secreted lipase involved in Dandruff and seborrheic dermatitis (D/SD) probably via lipase-mediated breakdown of sebaceous lipids and release of irritating free fatty acids. Shows activity against monoglyceride and diglyceride substrates. Due to an absence of fatty acid synthase genes in Malassezia species, secretory lipases are essential for the yeast to generate free fatty acids from degradation of sebum and assimilate them as lipid sources for growth. Plays an essential role at the pathogen-host interface during disease progression. The sequence is that of Secreted mono- and diacylglycerol lipase LIP4 from Malassezia restricta (Seborrheic dermatitis infection agent).